Reading from the N-terminus, the 727-residue chain is Probable acyl-activating enzyme 18, peroxisomal (727 aa).

The Microbody targeting signal motif lies at 725–727 (SRI).

This sequence belongs to the ATP-dependent AMP-binding enzyme family. In terms of tissue distribution, expressed in flowers.

The protein localises to the peroxisome. May be involved in the peroxisomal activation of 2,4-dichlorophenoxybutyric acid (2,4-DB), a precursor of active auxins that inhibit root growth. In Arabidopsis thaliana (Mouse-ear cress), this protein is Probable acyl-activating enzyme 18, peroxisomal (AAE18).